We begin with the raw amino-acid sequence, 121 residues long: Large ribosomal subunit protein uL18 (121 aa).

The protein belongs to the universal ribosomal protein uL18 family. Part of the 50S ribosomal subunit; part of the 5S rRNA/L5/L18/L25 subcomplex. Contacts the 5S and 23S rRNAs.

This is one of the proteins that bind and probably mediate the attachment of the 5S RNA into the large ribosomal subunit, where it forms part of the central protuberance. The sequence is that of Large ribosomal subunit protein uL18 from Polaromonas sp. (strain JS666 / ATCC BAA-500).